We begin with the raw amino-acid sequence, 367 residues long: Flagellar P-ring protein (367 aa).

Positions methionine 1–alanine 24 are cleaved as a signal peptide.

It belongs to the FlgI family. As to quaternary structure, the basal body constitutes a major portion of the flagellar organelle and consists of four rings (L,P,S, and M) mounted on a central rod.

The protein resides in the periplasm. It is found in the bacterial flagellum basal body. Its function is as follows. Assembles around the rod to form the L-ring and probably protects the motor/basal body from shearing forces during rotation. This chain is Flagellar P-ring protein, found in Syntrophotalea carbinolica (strain DSM 2380 / NBRC 103641 / GraBd1) (Pelobacter carbinolicus).